The chain runs to 631 residues: Forkhead box protein O1 (631 aa).

Pro residues predominate over residues 1–11 (MAEAPQPPPPL). 4 disordered regions span residues 1 to 57 (MAEA…PAAG), 90 to 147 (DIRQ…SRRN), 223 to 324 (SSWW…MPEQ), and 372 to 404 (PNSS…PNSE). Low complexity-rich tracts occupy residues 37 to 48 (NPSSSANSSPAP) and 100 to 135 (QQQQ…PLGA). A DNA-binding region (fork-head) is located at residues 149-243 (WGNLSYADLI…KNGKSPRRRA (95 aa)). The span at 253 to 264 (AKSRGRAAKKKA) shows a compositional bias: basic residues. A compositionally biased stretch (low complexity) spans 265 to 282 (SMQSSQDGSSDSPGSQFS). Polar residues-rich tracts occupy residues 303 to 315 (RPRT…TISG) and 381 to 403 (ASMM…SPNS).

Post-translationally, phosphorylated by AKT1; insulin-induced. In terms of processing, IGF1 rapidly induces phosphorylation of Thr-28, Ser-245 and Ser-308. Phosphorylation of Ser-245 decreases DNA-binding activity and promotes the phosphorylation of Thr-28, and Ser-308, which leads to nuclear exclusion and loss of function. Phosphorylation of Ser-318 is independent of IGF1 and leads to reduced function. Localized to the animal hemisphere during early cleavage stages. At early tadpole stages, expressed in the branchial arches, pronephros and liver. Within the head, expressed in the forming thyroid gland and in head mesenchyme anterior to the eyes.

Its subcellular location is the cytoplasm. The protein localises to the nucleus. In terms of biological role, transcription factor that regulates metabolic homeostasis in response to oxidative stress. Binds to the consensus sequence 5'-TT[G/A]TTTTG-3' and the related Daf-16 family binding element (DBE) with consensus sequence 5'-TT[G/A]TTTAC-3'. Main regulator of redox balance and osteoblast numbers and controls bone mass. Orchestrates the endocrine function of the skeleton in regulating glucose metabolism. Also acts as a key regulator of chondrogenic commitment of skeletal progenitor cells in response to lipid availability: when lipids levels are low, translocates to the nucleus and promotes expression of sox9, which induces chondrogenic commitment and suppresses fatty acid oxidation. Acts synergistically with atf4 to suppress osteocalcin/bglap activity, increasing glucose levels and triggering glucose intolerance and insulin insensitivity. Also suppresses the transcriptional activity of runx2, an upstream activator of osteocalcin/bglap. May act as a positive regulator of apoptosis in cardiac smooth muscle cells as a result of its transcriptional activation of pro-apoptotic genes. This is Forkhead box protein O1 from Xenopus laevis (African clawed frog).